We begin with the raw amino-acid sequence, 412 residues long: Phosphoglycerate kinase (412 aa).

Substrate is bound by residues 24 to 26, arginine 40, 63 to 66, arginine 122, and arginine 162; these read DLN and HLGR. ATP contacts are provided by residues lysine 212, glycine 300, glutamate 331, and 360–363; that span reads GGDS.

Belongs to the phosphoglycerate kinase family. As to quaternary structure, monomer.

It localises to the cytoplasm. It catalyses the reaction (2R)-3-phosphoglycerate + ATP = (2R)-3-phospho-glyceroyl phosphate + ADP. It functions in the pathway carbohydrate degradation; glycolysis; pyruvate from D-glyceraldehyde 3-phosphate: step 2/5. This is Phosphoglycerate kinase (pgk) from Mycobacterium bovis (strain ATCC BAA-935 / AF2122/97).